Here is a 557-residue protein sequence, read N- to C-terminus: UvrABC system protein C (557 aa).

One can recognise a GIY-YIG domain in the interval 14–89 (EEPGVYIFKN…IKKYRPKYNV (76 aa)). The UVR domain occupies 194-229 (EEVFDYLKEKMETHSRMLDFENAAKYRDLLLNLSNV).

This sequence belongs to the UvrC family. In terms of assembly, interacts with UvrB in an incision complex.

Its subcellular location is the cytoplasm. The UvrABC repair system catalyzes the recognition and processing of DNA lesions. UvrC both incises the 5' and 3' sides of the lesion. The N-terminal half is responsible for the 3' incision and the C-terminal half is responsible for the 5' incision. This Thermotoga petrophila (strain ATCC BAA-488 / DSM 13995 / JCM 10881 / RKU-1) protein is UvrABC system protein C.